Reading from the N-terminus, the 350-residue chain is Spermidine/putrescine import ATP-binding protein PotA (350 aa).

Positions 6 to 236 (LELRNISKQY…PENLWTAQFI (231 aa)) constitute an ABC transporter domain. Residue 38 to 45 (GPSGCGKT) coordinates ATP.

Belongs to the ABC transporter superfamily. Spermidine/putrescine importer (TC 3.A.1.11.1) family. As to quaternary structure, the complex is composed of two ATP-binding proteins (PotA), two transmembrane proteins (PotB and PotC) and a solute-binding protein (PotD).

The protein resides in the cell membrane. The catalysed reaction is ATP + H2O + polyamine-[polyamine-binding protein]Side 1 = ADP + phosphate + polyamineSide 2 + [polyamine-binding protein]Side 1.. Part of the ABC transporter complex PotABCD involved in spermidine/putrescine import. Responsible for energy coupling to the transport system. This Spiroplasma citri protein is Spermidine/putrescine import ATP-binding protein PotA.